Reading from the N-terminus, the 614-residue chain is MTTLDSNNNTGGVITYIGSSGSSPSRTSPESLYSDNSNGSFQSLTQGCPTYFPPSPTGSLTQDPARSFGSIPPSLSDDGSPSSSSSSSSSSSSFYNGSPPGSLQVAMEDSSRVSPSKSTSNITKLNGMVLLCKVCGDVASGFHYGVHACEGCKGFFRRSIQQNIQYKRCLKNENCSIVRINRNRCQQCRFKKCLSVGMSRDAVRFGRIPKREKQRMLAEMQSAMNLANNQLSSQCPLETSPTQHPTPGPMGPSPPPAPVPSPLVGFSQFPQQLTPPRSPSPEPTVEDVISQVARAHREIFTYAHDKLGSSPGNFNANHASGSPPATTPHRWENQGCPPAPNDNNTLAAQRHNEALNGLRQAPSSYPPTWPPGPAHHSCHQSNSNGHRLCPTHVYAAPEGKAPANSPRQGNSKNVLLACPMNMYPHGRSGRTVQEIWEDFSMSFTPAVREVVEFAKHIPGFRDLSQHDQVTLLKAGTFEVLMVRFASLFNVKDQTVMFLSRTTYSLQELGAMGMGDLLSAMFDFSEKLNSLALTEEELGLFTAVVLVSADRSGMENSASVEQLQETLLRALRALVLKNRPLETSRFTKLLLKLPDLRTLNNMHSEKLLSFRVDAQ.

Positions 1 to 12 are enriched in polar residues; sequence MTTLDSNNNTGG. A required for phosphorylation by CSNK1E and cytoplasmic localization region spans residues 1–70; that stretch reads MTTLDSNNNT…TQDPARSFGS (70 aa). The disordered stretch occupies residues 1-119; sequence MTTLDSNNNT…SSRVSPSKST (119 aa). Residues 1-128 are modulating; that stretch reads MTTLDSNNNT…TSNITKLNGM (128 aa). Over residues 14–34 the composition is skewed to low complexity; that stretch reads ITYIGSSGSSPSRTSPESLYS. Over residues 35-48 the composition is skewed to polar residues; it reads DNSNGSFQSLTQGC. The tract at residues 49–284 is crucial for activation of GJA1; the sequence is PTYFPPSPTG…PPRSPSPEPT (236 aa). Residues Ser-55 and Ser-59 each carry the phosphoserine; by GSK3-beta modification. The segment covering 69–102 has biased composition (low complexity); sequence GSIPPSLSDDGSPSSSSSSSSSSSSFYNGSPPGS. Positions 129-205 form a DNA-binding region, nuclear receptor; it reads VLLCKVCGDV…VGMSRDAVRF (77 aa). 2 consecutive NR C4-type zinc fingers follow at residues 132–152 and 169–193; these read CKVC…CEGC and CLKN…FKKC. N6-acetyllysine; by KAT5 occurs at positions 191 and 192. A compositionally biased stretch (polar residues) spans 233–243; it reads SQCPLETSPTQ. Disordered regions lie at residues 233 to 285 and 311 to 345; these read SQCP…EPTV and PGNF…DNNT. A compositionally biased stretch (pro residues) spans 244–261; sequence HPTPGPMGPSPPPAPVPS. At Thr-274 the chain carries Phosphothreonine; by CDK1. The NR LBD domain occupies 284–614; that stretch reads TVEDVISQVA…KLLSFRVDAQ (331 aa). The segment covering 311 to 324 has biased composition (polar residues); that stretch reads PGNFNANHASGSPP. The residue at position 400 (Lys-400) is an N6-acetyllysine. Cys-418 provides a ligand contact to heme. An N6-acetyllysine modification is found at Lys-591. His-602 serves as a coordination point for heme.

This sequence belongs to the nuclear hormone receptor family. NR1 subfamily. Binds DNA as a monomer or a homodimer. Interacts with C1D, NR2E3 and SP1. Interacts with OPHN1 (via C-terminus). Interacts with ZNHIT1. Interacts with PER2; the interaction associates PER2 to BMAL1 promoter region. Interacts with CRY1. Interacts with CCAR2. Interacts with SIAH2. Interacts with CDK1. Interacts with FBXW7. Interacts with HUWE1. Interacts with NR0B2. Interacts with NFIL3. Interacts (via domain NR LBD) with HSP90AA1 and HSP90AB1. Ubiquitinated, leading to its proteasomal degradation. Ubiquitinated by SIAH2; leading to its proteasomal degradation. Ubiquitinated by the SCF(FBXW7) complex when phosphorylated by CDK1 leading to its proteasomal degradation. Rapidly ubiquitinated in response to inflammatory triggers and sumoylation is a prerequisite to its ubiquitination. Post-translationally, sumoylated by UBE2I, desumoylated by SENP1, and sumoylation is a prerequisite to its ubiquitination. In terms of processing, phosphorylated by CSNK1E; phosphorylation enhances its cytoplasmic localization. Undergoes lysosome-mediated degradation in a time-dependent manner in the liver. Widely expressed. Expressed at high levels in the liver, adipose tissue, skeletal muscle and brain. Also expressed in endothelial cells (ECs), vascular smooth muscle cells (VSMCs) and macrophages. Expression oscillates diurnally in the suprachiasmatic nucleus (SCN) of the hypothalamus as well as in peripheral tissues. Expression increases during the differentiation of pre-adipocytes into mature adipocytes. Expressed at high levels in some squamous carcinoma cell lines.

It localises to the nucleus. It is found in the cytoplasm. Its subcellular location is the cell projection. The protein resides in the dendrite. The protein localises to the dendritic spine. Transcriptional repressor which coordinates circadian rhythm and metabolic pathways in a heme-dependent manner. Integral component of the complex transcription machinery that governs circadian rhythmicity and forms a critical negative limb of the circadian clock by directly repressing the expression of core clock components BMAL1, CLOCK and CRY1. Also regulates genes involved in metabolic functions, including lipid and bile acid metabolism, adipogenesis, gluconeogenesis and the macrophage inflammatory response. Acts as a receptor for heme which stimulates its interaction with the NCOR1/HDAC3 corepressor complex, enhancing transcriptional repression. Recognizes two classes of DNA response elements within the promoter of its target genes and can bind to DNA as either monomers or homodimers, depending on the nature of the response element. Binds as a monomer to a response element composed of the consensus half-site motif 5'-[A/G]GGTCA-3' preceded by an A/T-rich 5' sequence (RevRE), or as a homodimer to a direct repeat of the core motif spaced by two nucleotides (RevDR-2). Acts as a potent competitive repressor of ROR alpha (RORA) function and regulates the levels of its ligand heme by repressing the expression of PPARGC1A, a potent inducer of heme synthesis. Regulates lipid metabolism by repressing the expression of APOC3 and by influencing the activity of sterol response element binding proteins (SREBPs); represses INSIG2 which interferes with the proteolytic activation of SREBPs which in turn govern the rhythmic expression of enzymes with key functions in sterol and fatty acid synthesis. Regulates gluconeogenesis via repression of G6PC1 and PEPCK and adipocyte differentiation via repression of PPARG. Regulates glucagon release in pancreatic alpha-cells via the AMPK-NAMPT-SIRT1 pathway and the proliferation, glucose-induced insulin secretion and expression of key lipogenic genes in pancreatic-beta cells. Positively regulates bile acid synthesis by increasing hepatic expression of CYP7A1 via repression of NR0B2 and NFIL3 which are negative regulators of CYP7A1. Modulates skeletal muscle oxidative capacity by regulating mitochondrial biogenesis and autophagy; controls mitochondrial biogenesis and respiration by interfering with the STK11-PRKAA1/2-SIRT1-PPARGC1A signaling pathway. Represses the expression of SERPINE1/PAI1, an important modulator of cardiovascular disease and the expression of inflammatory cytokines and chemokines in macrophages. Represses gene expression at a distance in macrophages by inhibiting the transcription of enhancer-derived RNAs (eRNAs). Plays a role in the circadian regulation of body temperature and negatively regulates thermogenic transcriptional programs in brown adipose tissue (BAT); imposes a circadian oscillation in BAT activity, increasing body temperature when awake and depressing thermogenesis during sleep. In concert with NR2E3, regulates transcriptional networks critical for photoreceptor development and function. In addition to its activity as a repressor, can also act as a transcriptional activator. In the ovarian granulosa cells acts as a transcriptional activator of STAR which plays a role in steroid biosynthesis. In collaboration with SP1, activates GJA1 transcription in a heme-independent manner. Represses the transcription of CYP2B10, CYP4A10 and CYP4A14. Represses the transcription of CES2. Represses and regulates the circadian expression of TSHB in a NCOR1-dependent manner. Negatively regulates the protein stability of NR3C1 and influences the time-dependent subcellular distribution of NR3C1, thereby affecting its transcriptional regulatory activity. Plays a critical role in the circadian control of neutrophilic inflammation in the lung; under resting, non-stress conditions, acts as a rhythmic repressor to limit inflammatory activity whereas in the presence of inflammatory triggers undergoes ubiquitin-mediated degradation thereby relieving inhibition of the inflammatory response. Plays a key role in the circadian regulation of microglial activation and neuroinflammation; suppresses microglial activation through the NF-kappaB pathway in the central nervous system. Plays a role in the regulation of the diurnal rhythms of lipid and protein metabolism in the skeletal muscle via transcriptional repression of genes controlling lipid and amino acid metabolism in the muscle. The protein is Nuclear receptor subfamily 1 group D member 1 (NR1D1) of Homo sapiens (Human).